The following is a 659-amino-acid chain: Cyclic-di-AMP phosphodiesterase GdpP (659 aa).

At 1 to 8 the chain is on the cytoplasmic side; it reads MPSFYEKP. A run of 2 helical transmembrane segments spans residues 9-29 and 30-50; these read LFRY…LISF and YFNW…LFFI. Over 51–659 the chain is Cytoplasmic; sequence KRADSLIRQE…DEYFEGGVQR (609 aa). A PAS-like domain, required for heme-binding region spans residues 84-149; it reads PIGIMLFNDQ…NDRKFRVVIK (66 aa). Residues 173 to 301 form the GGDEF domain; the sequence is ERTVLAYIFL…GGDQVAIKLP (129 aa). The DHH domain stretch occupies residues 339 to 496; it reads NVIIMGHKFP…IEATALLAGI (158 aa). Mn(2+) contacts are provided by H345, D349, D351, D420, H444, and D499. The tract at residues 591 to 646 is DHHA1 domain; the sequence is FAVARRDEQTVCISARSLGEVNVQIIMEALEGGGHLTNAATQLSGISVSEALERLK.

Belongs to the GdpP/PdeA phosphodiesterase family. The cofactor is heme b. Mg(2+) is required as a cofactor. It depends on Mn(2+) as a cofactor.

It localises to the cell membrane. It catalyses the reaction 3',3'-c-di-AMP + H2O = 5'-O-phosphonoadenylyl-(3'-&gt;5')-adenosine + H(+). Phosphodiesterase (PDE) inhibited by Zn(2+), Ca(2+) inhibits in the presence of Mg(2+) but not Mn(2+); c-di-AMP PDE activity is competitively inhibited by ppGpp. Heme binding (by Fe(2+) or Fe(3+) heme) inhibits PDE, activity is partially restored by KCN or NO only for Fe(2+) heme. Binding of NO to Fe(2+) heme switches from hexa- to pentacoordination. Heme binding inhibits the ATPase activity. Has phosphodiesterase (PDE) activity against cyclic-di-AMP (c-di-AMP) and to a much lesser extent against cyclic-di-GMP (c-di-GMP) in the DHH/DHHA1 domains. Also has ATPase activity, probably via the GGDEF domain. Overexpression leads to increased sensitivity to methyl methanesulfonate (MMS) and H(2)O(2). Overexpression leads to extreme sensitivity to the beta-lactam antibiotic cefuroxime (CEF), probably dependent on PDE activity. May monitor cellular heme or NO levels. In B.subtilis c-di-AMP is a second messenger that mediates growth, DNA repair and cell wall homeostasis; it is toxic when present in excess. The chain is Cyclic-di-AMP phosphodiesterase GdpP from Bacillus subtilis (strain 168).